Consider the following 640-residue polypeptide: 1,4-alpha-glucan branching enzyme GlgB (640 aa).

The Nucleophile role is filled by Asp318. The Proton donor role is filled by Glu371.

Belongs to the glycosyl hydrolase 13 family. GlgB subfamily. In terms of assembly, monomer.

It catalyses the reaction Transfers a segment of a (1-&gt;4)-alpha-D-glucan chain to a primary hydroxy group in a similar glucan chain.. Its pathway is glycan biosynthesis; glycogen biosynthesis. Catalyzes the formation of the alpha-1,6-glucosidic linkages in glycogen by scission of a 1,4-alpha-linked oligosaccharide from growing alpha-1,4-glucan chains and the subsequent attachment of the oligosaccharide to the alpha-1,6 position. This chain is 1,4-alpha-glucan branching enzyme GlgB, found in Francisella tularensis subsp. tularensis (strain FSC 198).